The sequence spans 138 residues: MAFYYKNNLGYQNIPYGYQLNDFRASFEKARTFDMEDDLEFCPSLSDEELVSIYQSTGLSPTSSSPSLSPMTPNLYPNVLPNVHPGVSNYTHHPLSGLHQNVGSRTRKSSGIPIIDPVTRAPAVLAGAVSSSRAKQMW.

Ser110 is modified (phosphoserine).

The protein localises to the cytoplasm. It is found in the nucleus. This is an uncharacterized protein from Schizosaccharomyces pombe (strain 972 / ATCC 24843) (Fission yeast).